A 348-amino-acid chain; its full sequence is Probable purine nucleoside permease C285.05 (348 aa).

Residues 1-21 (MLFLKLVASVLALMTIVPAQA) form the signal peptide.

Belongs to the NUP family.

It localises to the endoplasmic reticulum. Probable nucleoside permease that transports adenosine and guanosine. The polypeptide is Probable purine nucleoside permease C285.05 (Schizosaccharomyces pombe (strain 972 / ATCC 24843) (Fission yeast)).